The following is a 1353-amino-acid chain: Trifunctional purine biosynthetic protein adenosine-3 (1353 aa).

In terms of domain architecture, ATP-grasp spans 114-321 (KDFMLRHGIP…LFDVMEACCS (208 aa)). Residues 193-196 (EELL), E200, R223, and N232 each bind ATP. Positions 291 and 293 each coordinate Mg(2+). The segment at 441–1155 (GLSYKDSGVD…QKMLSQRRKR (715 aa)) is AIRS domain. 2 positions are modified to phosphoserine: S814 and S816. The GART domain stretch occupies residues 1153-1353 (RKRVAVLISG…ALISPEVSSQ (201 aa)). 1164–1166 (GSN) is a N(1)-(5-phospho-beta-D-ribosyl)glycinamide binding site. (6R)-10-formyltetrahydrofolate is bound by residues R1219, 1244–1247 (MRVL), and N1261. The active-site Proton donor is H1263. A (6R)-10-formyltetrahydrofolate-binding site is contributed by 1295-1299 (DEGVD). Residue 1325 to 1328 (HKAE) participates in N(1)-(5-phospho-beta-D-ribosyl)glycinamide binding.

The protein in the N-terminal section; belongs to the GARS family. It in the central section; belongs to the AIR synthase family. In the C-terminal section; belongs to the GART family. In terms of assembly, homodimer. Mg(2+) is required as a cofactor. Requires Mn(2+) as cofactor.

It carries out the reaction 5-phospho-beta-D-ribosylamine + glycine + ATP = N(1)-(5-phospho-beta-D-ribosyl)glycinamide + ADP + phosphate + H(+). The catalysed reaction is 2-formamido-N(1)-(5-O-phospho-beta-D-ribosyl)acetamidine + ATP = 5-amino-1-(5-phospho-beta-D-ribosyl)imidazole + ADP + phosphate + H(+). The enzyme catalyses N(1)-(5-phospho-beta-D-ribosyl)glycinamide + (6R)-10-formyltetrahydrofolate = N(2)-formyl-N(1)-(5-phospho-beta-D-ribosyl)glycinamide + (6S)-5,6,7,8-tetrahydrofolate + H(+). Its pathway is purine metabolism; IMP biosynthesis via de novo pathway; 5-amino-1-(5-phospho-D-ribosyl)imidazole from N(2)-formyl-N(1)-(5-phospho-D-ribosyl)glycinamide: step 2/2. It functions in the pathway purine metabolism; IMP biosynthesis via de novo pathway; N(1)-(5-phospho-D-ribosyl)glycinamide from 5-phospho-alpha-D-ribose 1-diphosphate: step 2/2. The protein operates within purine metabolism; IMP biosynthesis via de novo pathway; N(2)-formyl-N(1)-(5-phospho-D-ribosyl)glycinamide from N(1)-(5-phospho-D-ribosyl)glycinamide (10-formyl THF route): step 1/1. Its function is as follows. Trifunctional enzyme that catalyzes three distinct reactions as part of the 'de novo' inosine monophosphate biosynthetic pathway. The sequence is that of Trifunctional purine biosynthetic protein adenosine-3 from Drosophila melanogaster (Fruit fly).